The primary structure comprises 491 residues: MLIRCVAVAKTRFNTTGVVSRLVSSLADGSDTSSVANRNSLKEILRKNGPRRSVTSLLQERIDSGHAVSLSELRLISKRLIRSNRYDLALQMMEWMENQKDIEFSVYDIALRLDLIIKTHGLKQGEEYFEKLLHSSVSMRVAKSAYLPLLRAYVKNKMVKEAEALMEKLNGLGFLVTPHPFNEMMKLYEASGQYEKVVMVVSMMKGNKIPRNVLSYNLWMNACCEVSGVAAVETVYKEMVGDKSVEVGWSSLCTLANVYIKSGFDEKARLVLEDAEKMLNRSNRLGYFFLITLYASLGNKEGVVRLWEVSKSVCGRISCVNYICVLSSLVKTGDLEEAERVFSEWEAQCFNYDVRVSNVLLGAYVRNGEIRKAESLHGCVLERGGTPNYKTWEILMEGWVKCENMEKAIDAMHQVFVLMRRCHWRPSHNIVMAIAEYFEKEEKIEEATAYVRDLHRLGLASLPLYRLLLRMHEHAKRPAYDIYEMMKLDKL.

PPR repeat units follow at residues 69–99 (SLSELRLISKRLIRSNRYDLALQMMEWMENQ), 105–139 (SVYDIALRLDLIIKTHGLKQGEEYFEKLLHSSVSM), 142–176 (AKSAYLPLLRAYVKNKMVKEAEALMEKLNGLGFLV), 177–211 (TPHPFNEMMKLYEASGQYEKVVMVVSMMKGNKIPR), 212–246 (NVLSYNLWMNACCEVSGVAAVETVYKEMVGDKSVE), 248–278 (GWSSLCTLANVYIKSGFDEKARLVLEDAEKM), 283–313 (NRLGYFFLITLYASLGNKEGVVRLWEVSKSV), 318–348 (SCVNYICVLSSLVKTGDLEEAERVFSEWEAQ), 353–387 (DVRVSNVLLGAYVRNGEIRKAESLHGCVLERGGTP), and 388–426 (NYKTWEILMEGWVKCENMEKAIDAMHQVFVLMRRCHWRP).

Belongs to the PPR family. P subfamily.

In Arabidopsis thaliana (Mouse-ear cress), this protein is Pentatricopeptide repeat-containing protein At5g27460.